Reading from the N-terminus, the 95-residue chain is Small ribosomal subunit protein bS6 (95 aa).

It belongs to the bacterial ribosomal protein bS6 family.

Binds together with bS18 to 16S ribosomal RNA. This is Small ribosomal subunit protein bS6 from Bacillus licheniformis (strain ATCC 14580 / DSM 13 / JCM 2505 / CCUG 7422 / NBRC 12200 / NCIMB 9375 / NCTC 10341 / NRRL NRS-1264 / Gibson 46).